The chain runs to 87 residues: MCLSCQFWCLECQESGVGCRCVDCCSCLQCAAGCQGAPKRSQPEAGVASAAVTIQPSGALNNAPREPSAPPLSQTLSPRQVLARYQM.

The interval G58–M87 is disordered. A PTAP/PSAP motif motif is present at residues P67–P70.

This sequence belongs to the hepevirus ORF3 protein family. Palmitoylated in the N-terminus.

It localises to the host endoplasmic reticulum membrane. Its subcellular location is the host cytoplasm. The protein resides in the host cytoskeleton. The protein localises to the virion. It is found in the host cell membrane. Functionally, small multifunctional phosphoprotein involved in virion morphogenesis, egress and counteracting host innate immunity. The chain is Protein ORF3 from Avian hepatitis E virus (isolate Chicken/California/Meng) (AHEV).